Consider the following 446-residue polypeptide: tRNA-2-methylthio-N(6)-dimethylallyladenosine synthase (446 aa).

An MTTase N-terminal domain is found at arginine 6 to aspartate 122. 6 residues coordinate [4Fe-4S] cluster: cysteine 15, cysteine 51, cysteine 85, cysteine 157, cysteine 161, and cysteine 164. Positions arginine 143–glutamate 380 constitute a Radical SAM core domain. Residues glutamine 383–phenylalanine 446 form the TRAM domain.

The protein belongs to the methylthiotransferase family. MiaB subfamily. In terms of assembly, monomer. The cofactor is [4Fe-4S] cluster.

It is found in the cytoplasm. The catalysed reaction is N(6)-dimethylallyladenosine(37) in tRNA + (sulfur carrier)-SH + AH2 + 2 S-adenosyl-L-methionine = 2-methylsulfanyl-N(6)-dimethylallyladenosine(37) in tRNA + (sulfur carrier)-H + 5'-deoxyadenosine + L-methionine + A + S-adenosyl-L-homocysteine + 2 H(+). Functionally, catalyzes the methylthiolation of N6-(dimethylallyl)adenosine (i(6)A), leading to the formation of 2-methylthio-N6-(dimethylallyl)adenosine (ms(2)i(6)A) at position 37 in tRNAs that read codons beginning with uridine. The chain is tRNA-2-methylthio-N(6)-dimethylallyladenosine synthase from Microcystis aeruginosa (strain NIES-843 / IAM M-2473).